We begin with the raw amino-acid sequence, 448 residues long: Methionine aminopeptidase 2 (448 aa).

Residues 1 to 47 (MTSSVDKVSQKVADVKLGSSKSTKNNKSKGKGKSNKNQVVEDDDEDD) form a disordered region. The span at 24–34 (KNNKSKGKGKS) shows a compositional bias: basic residues. His-198 provides a ligand contact to substrate. Asp-218, Asp-229, and His-298 together coordinate a divalent metal cation. Substrate is bound at residue His-306. Glu-331 and Glu-429 together coordinate a divalent metal cation.

Belongs to the peptidase M24A family. Methionine aminopeptidase eukaryotic type 2 subfamily. Co(2+) is required as a cofactor. Zn(2+) serves as cofactor. It depends on Mn(2+) as a cofactor. The cofactor is Fe(2+).

It is found in the cytoplasm. It carries out the reaction Release of N-terminal amino acids, preferentially methionine, from peptides and arylamides.. Functionally, cotranslationally removes the N-terminal methionine from nascent proteins. The N-terminal methionine is often cleaved when the second residue in the primary sequence is small and uncharged (Met-Ala-, Cys, Gly, Pro, Ser, Thr, or Val). This Komagataella phaffii (strain GS115 / ATCC 20864) (Yeast) protein is Methionine aminopeptidase 2.